The primary structure comprises 65 residues: Hirudin-3A (65 aa).

An interaction with thrombin active site region spans residues 1–3 (VVY). 3 disulfide bridges follow: C6-C14, C16-C28, and C22-C39. The tract at residues 39-65 (CVTGEGTPKPQSHNDGDFEEIPEEYLQ) is disordered. T45 carries an O-linked (GalNAc...) threonine glycan. The interaction with fibrinogen-binding exosite of thrombin stretch occupies residues 55–65 (DFEEIPEEYLQ). Over residues 55–65 (DFEEIPEEYLQ) the composition is skewed to acidic residues. Y63 is modified (sulfotyrosine).

Belongs to the protease inhibitor I14 (hirudin) family.

It is found in the secreted. In terms of biological role, hirudin is a potent thrombin-specific protease inhibitor. It forms a stable non-covalent complex with alpha-thrombin, thereby abolishing its ability to cleave fibrinogen. The sequence is that of Hirudin-3A from Hirudo medicinalis (Medicinal leech).